The primary structure comprises 129 residues: MSLFSGTIQNLENALSRADIKQKVITNNIANIDTPNYKAKKVSFQNLLDQESSRLEAIKTDYRHVDFSDTDSNYSIVASGDTSYQQNGNNVDVDKEMTELAQNQINYQALVERMNGKFNSLKTVLTGGK.

This sequence belongs to the flagella basal body rod proteins family. In terms of assembly, the basal body constitutes a major portion of the flagellar organelle and consists of a number of rings mounted on a central rod. In Gram-negative bacteria, at least four rings, L, P, S and M are present, whereas Gram-positive bacteria lack the L and P rings. The rod consists of about 26 subunits of FlgG in the distal portion, and FlgB, FlgC and FlgF build up the proximal portion of the rod with about 6 subunits each. Rod assembly occurs by export via the flagellum-specific pathway of its constituent proteins and by their incorporation into the rod structure in the probable order of FlgB, FlgC, FlgF and FlgG. Another protein, FliE, also assembles onto the stable rod structure.

It is found in the bacterial flagellum basal body. Structural component of flagellum, the bacterial motility apparatus. Part of the rod structure of flagellar basal body. This chain is Flagellar basal body rod protein FlgB (flgB), found in Bacillus subtilis (strain 168).